A 128-amino-acid chain; its full sequence is Small ribosomal subunit protein uS9 (128 aa).

The segment at 105–128 (DPRSVERKKPGQPKARRRFQFSKR) is disordered. The span at 114–128 (PGQPKARRRFQFSKR) shows a compositional bias: basic residues.

Belongs to the universal ribosomal protein uS9 family.

The polypeptide is Small ribosomal subunit protein uS9 (Bacteroides thetaiotaomicron (strain ATCC 29148 / DSM 2079 / JCM 5827 / CCUG 10774 / NCTC 10582 / VPI-5482 / E50)).